Reading from the N-terminus, the 280-residue chain is ATP synthase gamma chain (280 aa).

Belongs to the ATPase gamma chain family. In terms of assembly, F-type ATPases have 2 components, CF(1) - the catalytic core - and CF(0) - the membrane proton channel. CF(1) has five subunits: alpha(3), beta(3), gamma(1), delta(1), epsilon(1). CF(0) has three main subunits: a, b and c.

The protein resides in the cell membrane. Produces ATP from ADP in the presence of a proton gradient across the membrane. The gamma chain is believed to be important in regulating ATPase activity and the flow of protons through the CF(0) complex. The sequence is that of ATP synthase gamma chain from Mycoplasma capricolum subsp. capricolum (strain California kid / ATCC 27343 / NCTC 10154).